A 293-amino-acid chain; its full sequence is Phosphate import ATP-binding protein PstB (293 aa).

Positions 46-288 constitute an ABC transporter domain; it reads MTCRKVDVHY…PGHQLTEDYI (243 aa). 78–85 contacts ATP; that stretch reads GPSGCGKS.

The protein belongs to the ABC transporter superfamily. Phosphate importer (TC 3.A.1.7) family. In terms of assembly, the complex is composed of two ATP-binding proteins (PstB), two transmembrane proteins (PstC and PstA) and a solute-binding protein (PstS).

Its subcellular location is the cell inner membrane. The catalysed reaction is phosphate(out) + ATP + H2O = ADP + 2 phosphate(in) + H(+). In terms of biological role, part of the ABC transporter complex PstSACB involved in phosphate import. Responsible for energy coupling to the transport system. The sequence is that of Phosphate import ATP-binding protein PstB from Desulfotalea psychrophila (strain LSv54 / DSM 12343).